A 209-amino-acid chain; its full sequence is Orotate phosphoribosyltransferase (209 aa).

5-phospho-alpha-D-ribose 1-diphosphate is bound by residues Arg96, Lys100, His102, and 122-130 (EDLISTGGS). Position 126 (Ser126) interacts with orotate.

This sequence belongs to the purine/pyrimidine phosphoribosyltransferase family. PyrE subfamily. As to quaternary structure, homodimer. The cofactor is Mg(2+).

It catalyses the reaction orotidine 5'-phosphate + diphosphate = orotate + 5-phospho-alpha-D-ribose 1-diphosphate. The protein operates within pyrimidine metabolism; UMP biosynthesis via de novo pathway; UMP from orotate: step 1/2. Its function is as follows. Catalyzes the transfer of a ribosyl phosphate group from 5-phosphoribose 1-diphosphate to orotate, leading to the formation of orotidine monophosphate (OMP). This Streptococcus pyogenes serotype M2 (strain MGAS10270) protein is Orotate phosphoribosyltransferase.